A 603-amino-acid chain; its full sequence is NADH-ubiquinone oxidoreductase chain 5 (603 aa).

16 helical membrane passes run 4–24 (YATMTTLALTSLIPPILGALI), 38–58 (SIIASTFIISLFPTTMFMCLD), 87–107 (MTFIPVALFVTWSIMEFSLWY), 122–142 (LIFLITMLILVTANNLFQLFI), 144–160 (WEGVGIMSFLLISWWYA), 171–191 (AILYNRIGDIGFVLALAWFLL), 211–233 (TPLLGFLLAAAGKSAQLGLHPWL), 241–261 (TPVSALLHSSTMVVAGIFLLI), 272–292 (LIQTLTLCLGAITTLFAAVCA), 301–320 (IVAFSTSSQLGLMMVTIGIN), 325–347 (AFLHICTHAFFKAMLFMCSGSII), 370–390 (STSLTIGSLALAGMPFLTGFY), 405–422 (NAWALSITLIATSLTSAY), 457–477 (LTIGSLFAGFLITNNILPMST), 482–502 (IPLYLKLTALGVTSLGLLTAL), and 582–602 (GMIKLYFLSFFFPLILTLLLI).

The protein belongs to the complex I subunit 5 family. In terms of assembly, core subunit of respiratory chain NADH dehydrogenase (Complex I) which is composed of 45 different subunits.

It localises to the mitochondrion inner membrane. It catalyses the reaction a ubiquinone + NADH + 5 H(+)(in) = a ubiquinol + NAD(+) + 4 H(+)(out). Core subunit of the mitochondrial membrane respiratory chain NADH dehydrogenase (Complex I) which catalyzes electron transfer from NADH through the respiratory chain, using ubiquinone as an electron acceptor. Essential for the catalytic activity and assembly of complex I. The protein is NADH-ubiquinone oxidoreductase chain 5 (MT-ND5) of Pan troglodytes (Chimpanzee).